Reading from the N-terminus, the 258-residue chain is Pro-thyrotropin-releasing hormone-A (258 aa).

Positions 1–22 (MKSACLIILASLVVCNLTLARG) are cleaved as a signal peptide. Q78 is subject to Pyrrolidone carboxylic acid. The residue at position 80 (P80) is a Proline amide. 2 stretches are compositionally biased toward basic and acidic residues: residues 84–98 (YQEE…GKRE) and 107–119 (EVQK…KRED). The disordered stretch occupies residues 84 to 124 (YQEELEKRQHPGKREEDEDEDYDEVQKRQHPGKREDEFDSF). Q92 bears the Pyrrolidone carboxylic acid mark. Position 94 is a proline amide (P94). Position 112 is a pyrrolidone carboxylic acid (Q112). Proline amide is present on P114. Q131 is subject to Pyrrolidone carboxylic acid. At P133 the chain carries Proline amide. Residue Q156 is modified to Pyrrolidone carboxylic acid. Residue P158 is modified to Proline amide. Disordered stretches follow at residues 166-215 (YSKR…PCDV) and 236-258 (SRAE…TEQE). Q170 bears the Pyrrolidone carboxylic acid mark. The residue at position 172 (P172) is a Proline amide. A compositionally biased stretch (basic and acidic residues) spans 184–193 (GDLRELEKRQ). The residue at position 193 (Q193) is a Pyrrolidone carboxylic acid. Proline amide is present on P195. Pyrrolidone carboxylic acid is present on Q242. A Proline amide modification is found at P244.

Belongs to the TRH family.

The protein resides in the secreted. Its function is as follows. Functions as a regulator of the biosynthesis of TSH in the anterior pituitary gland and as a neurotransmitter/ neuromodulator in the central and peripheral nervous systems. This is Pro-thyrotropin-releasing hormone-A (trha) from Oncorhynchus nerka (Sockeye salmon).